The sequence spans 144 residues: Ribosomally synthesized cyclic peptide phomopsin precursor phomA' (144 aa).

An N-terminal signal peptide occupies residues 1–18 (MRFTPAIVIAAFCSLAVA). Propeptides lie at residues 19–35 (APAAKAIARSPSEAVED), 42–50 (KKRGEAVED), 57–65 (KKRGEAVED), 72–79 (KRGEAVED), 86–94 (KKRGEAVED), 101–108 (KRGEAVED), 115–123 (KKRGEAVED), 130–137 (KRGEAVED), and Lys-144.

In terms of processing, phomA' is processed by several endopeptidases including kexin proteases as well as the cluster-specific S41 family peptidase phomP1' and the peptidase phomG' to produce 5 identical copies of the hexapeptide Tyr-Val-Ile-Pro-Ile-Asp and 3 identical copies of Tyr-Val-Ile-Pro-Phe-Asp, that are further modified into phomapsins A and P, respectively. The timing and order of proteolysis of the phomA' precursor and PTMs are still unknown. Two tyrosinase-like enzyme phomQ1' and PhomQ2, catalyze the chlorination and hydroxylation of Tyr, respectively. PhomYb', is proposed to be involved in the construction of the macrocyclic structure. The other four ustYa family proteins may be involved in PTMs that generate the unique structure of phomopsin A. PhomYa' is required for the hydroxylation of C-beta of Tyr. PhomYc', PhomYd', and PhomYe' are responsible for the biosynthesis of 2,3-dehydroisoleucine (dIle), 2,3-dehydroaspartic acid (dAsp), and 3,4-dehydroproline (dPro), respectively. While dIle formation by phomYc is indispensable for the installation of dAsp by phomYd, the order of the other PTMs have not been elucidated yet. Most of the biosynthetic enzymes likely have broad substrate specificity, and thus, there might be a metabolic grid from a precursor to phomopsin A. The enzyme(s) responsible for the biosynthesis of 3,4-dehydrovaline (dVal) have also not been identified yet. Finally, PhomM' acts as an S-adenosylmethionine-dependent alpha-N-methyltransferase that catalyzes two successive N-methylation reactions, converting N-desmethyl-phomopsin A to phomopsin A and phomopsin A further to an N,N-dimethylated congener called phomopsin E.

Its pathway is mycotoxin biosynthesis. Ribosomally synthesized cyclic peptide phomopsin precursor; part of the gene cluster that mediates the biosynthesis of the phomopsins, a group of hexapeptide mycotoxins which infects lupins and causes lupinosis disease in livestock. The phomA' translated product contains a 5-fold repeated peptide embedding the hexapeptide Tyr-Val-Ile-Pro-Ile-Asp and a 3-fold repeated peptide embedding the hexapeptide Tyr-Val-Ile-Pro-Phe-Asp, that is converted into phomapsin A and phomapsin P, respectively. After being excised from the precursor peptide by kexin proteases, the core peptides are cyclized and modified post-translationally by enzymes encoded within the corresponding gene cluster. In Diaporthe leptostromiformis (Lupinosis disease fungus), this protein is Ribosomally synthesized cyclic peptide phomopsin precursor phomA'.